The primary structure comprises 359 residues: Phospho-N-acetylmuramoyl-pentapeptide-transferase (359 aa).

Helical transmembrane passes span 3–23, 55–75, 80–100, 117–137, 156–176, 187–207, 231–251, 255–275, 280–300, and 334–354; these read QILI…PVLI, VAIL…GLAF, IGAS…VGFI, TAKT…VLQF, IATV…IVSA, LDGL…LITF, LALI…WNAA, IFMG…LSVT, ILAV…VLQI, and FWLL…GEWL.

This sequence belongs to the glycosyltransferase 4 family. MraY subfamily. It depends on Mg(2+) as a cofactor.

Its subcellular location is the cell membrane. The catalysed reaction is UDP-N-acetyl-alpha-D-muramoyl-L-alanyl-gamma-D-glutamyl-meso-2,6-diaminopimeloyl-D-alanyl-D-alanine + di-trans,octa-cis-undecaprenyl phosphate = di-trans,octa-cis-undecaprenyl diphospho-N-acetyl-alpha-D-muramoyl-L-alanyl-D-glutamyl-meso-2,6-diaminopimeloyl-D-alanyl-D-alanine + UMP. Its pathway is cell wall biogenesis; peptidoglycan biosynthesis. Its function is as follows. Catalyzes the initial step of the lipid cycle reactions in the biosynthesis of the cell wall peptidoglycan: transfers peptidoglycan precursor phospho-MurNAc-pentapeptide from UDP-MurNAc-pentapeptide onto the lipid carrier undecaprenyl phosphate, yielding undecaprenyl-pyrophosphoryl-MurNAc-pentapeptide, known as lipid I. This chain is Phospho-N-acetylmuramoyl-pentapeptide-transferase, found in Mycobacterium tuberculosis (strain ATCC 25177 / H37Ra).